We begin with the raw amino-acid sequence, 283 residues long: Pantothenate synthetase (283 aa).

Residue 30-37 (MGYLHEGH) participates in ATP binding. The active-site Proton donor is His-37. Gln-61 contacts (R)-pantoate. Gln-61 is a binding site for beta-alanine. 147-150 (GQKD) contacts ATP. Gln-153 is a binding site for (R)-pantoate. Residues Val-176 and 184–187 (MSSR) contribute to the ATP site.

Belongs to the pantothenate synthetase family. In terms of assembly, homodimer.

The protein resides in the cytoplasm. The enzyme catalyses (R)-pantoate + beta-alanine + ATP = (R)-pantothenate + AMP + diphosphate + H(+). It functions in the pathway cofactor biosynthesis; (R)-pantothenate biosynthesis; (R)-pantothenate from (R)-pantoate and beta-alanine: step 1/1. Functionally, catalyzes the condensation of pantoate with beta-alanine in an ATP-dependent reaction via a pantoyl-adenylate intermediate. The polypeptide is Pantothenate synthetase (Thermoanaerobacter sp. (strain X514)).